Reading from the N-terminus, the 368-residue chain is MQLDKYTAKKIVKRAMKIIHHSVNVMDHDGVIIASGNSTRLNQRHTGAVLALRENRVVEIDQALAQKWNFEAQPGINLPIHYLGKNIGVVGISGEPTQVKQYAELVKMTAELIVEQQALLEQESWHRRYKEEFILQLLHCNLNWKEMEQQAKFFSFDLNKSRVVVLIKLLNPALDNLQNLINYLEQSEFAQDVAILSLDQVVVLKTWQNSTVLSAQMKTLLPADYSKQDYKIAVGACLNLPLFEQLPLSFQSAQSTLSYGLKHHPRKGIYVFDEHRLPVLLAGLSHSWQGNELIKPLSPLFSEENAILYKTLQQYFLSNCDLYLTAEKLFVHPNTLRYRLNKIEQITGLFFNKIDDKLTLYLGTLLEH.

This sequence belongs to the CdaR family.

This is an uncharacterized protein from Haemophilus influenzae (strain ATCC 51907 / DSM 11121 / KW20 / Rd).